The primary structure comprises 178 residues: Large ribosomal subunit protein uL6 (178 aa).

It belongs to the universal ribosomal protein uL6 family. In terms of assembly, part of the 50S ribosomal subunit.

Functionally, this protein binds to the 23S rRNA, and is important in its secondary structure. It is located near the subunit interface in the base of the L7/L12 stalk, and near the tRNA binding site of the peptidyltransferase center. The protein is Large ribosomal subunit protein uL6 of Helicobacter pylori (strain P12).